The following is a 569-amino-acid chain: Carboxylesterase 3 (569 aa).

The first 24 residues, methionine 1–glycine 24, serve as a signal peptide directing secretion. Cysteine 95 and cysteine 122 are joined by a disulfide. Asparagine 103 carries N-linked (GlcNAc...) asparagine glycosylation. The active-site Acyl-ester intermediate is the serine 227. Cysteine 279 and cysteine 290 are disulfide-bonded. Catalysis depends on charge relay system residues glutamate 345 and histidine 458. Residues glutamine 566–leucine 569 carry the Prevents secretion from ER motif.

The protein belongs to the type-B carboxylesterase/lipase family. In terms of processing, N-glycosylated.

Its subcellular location is the endoplasmic reticulum lumen. The catalysed reaction is a carboxylic ester + H2O = an alcohol + a carboxylate + H(+). In terms of biological role, involved in the detoxification of xenobiotics and in the activation of ester and amide prodrugs. This Pongo abelii (Sumatran orangutan) protein is Carboxylesterase 3 (CES3).